Here is a 62-residue protein sequence, read N- to C-terminus: Sperm protamine P1 (62 aa).

The segment at 1 to 62 (MARYRHSRSR…RYSRRRRRRY (62 aa)) is disordered.

It belongs to the protamine P1 family. In terms of tissue distribution, testis.

Its subcellular location is the nucleus. The protein resides in the chromosome. Its function is as follows. Protamines substitute for histones in the chromatin of sperm during the haploid phase of spermatogenesis. They compact sperm DNA into a highly condensed, stable and inactive complex. The chain is Sperm protamine P1 (PRM1) from Dorcopsulus vanheurni (Lesser forest wallaby).